Reading from the N-terminus, the 88-residue chain is EMBRYO SURROUNDING FACTOR 1-like protein 7 (88 aa).

The signal sequence occupies residues 1–22; the sequence is MKSSHIALICIVMFSLFALHES. 4 disulfide bridges follow: cysteine 41–cysteine 57, cysteine 46–cysteine 85, cysteine 55–cysteine 81, and cysteine 58–cysteine 68.

Belongs to the MEG family. As to expression, expressed in leaves and flowers.

The sequence is that of EMBRYO SURROUNDING FACTOR 1-like protein 7 (ESFL7) from Arabidopsis thaliana (Mouse-ear cress).